The primary structure comprises 294 residues: MGIRTLRPYTPSTRHMTVSDFEELSRDENGKRPRPEKSLLQFIHRKKGRNNRGVITCRHRGGGHKRLYRIIDFRRDKRGIPGTVKTVEYDPNRSAHICLVEYEDGEKRYILAPRNLQVGSTIMAGPEAPFEIGNAMPLERIPLGTVVHNVELYPGRGGQMVRAAGAGAQVVAREGKYVSLKLPSGEVRMIRGECYATIGQLGNVDHNNISLGKAGRSRWLGRRPKVRGSVMNPVDHPHGGGEGRAPIGRSTPVTPWGKPTLGYKTRKRNKPSNKFIVRGRRRGGRRDKGGRAAQ.

Disordered stretches follow at residues methionine 1 to lysine 37 and glycine 228 to glutamine 294. The span at glutamate 23–lysine 37 shows a compositional bias: basic and acidic residues. The segment covering lysine 264–arginine 285 has biased composition (basic residues).

It belongs to the universal ribosomal protein uL2 family. In terms of assembly, part of the 50S ribosomal subunit. Forms a bridge to the 30S subunit in the 70S ribosome.

Functionally, one of the primary rRNA binding proteins. Required for association of the 30S and 50S subunits to form the 70S ribosome, for tRNA binding and peptide bond formation. It has been suggested to have peptidyltransferase activity; this is somewhat controversial. Makes several contacts with the 16S rRNA in the 70S ribosome. The chain is Large ribosomal subunit protein uL2 from Synechococcus sp. (strain JA-2-3B'a(2-13)) (Cyanobacteria bacterium Yellowstone B-Prime).